The primary structure comprises 73 residues: Aldehyde dehydrogenase (73 aa).

This sequence belongs to the aldehyde dehydrogenase family.

The catalysed reaction is an aldehyde + NAD(+) + H2O = a carboxylate + NADH + 2 H(+). It functions in the pathway alcohol metabolism; ethanol degradation; acetate from ethanol: step 2/2. The chain is Aldehyde dehydrogenase from Geobacillus stearothermophilus (Bacillus stearothermophilus).